We begin with the raw amino-acid sequence, 256 residues long: Gamma carbonic anhydrase-like 2, mitochondrial (256 aa).

A mitochondrion-targeting transit peptide spans 1-33; it reads MATSLARISKRSITSAVSSNLIRRYFAAEAVAV. Residues 103–105 and 118–119 each bind substrate; these read RGD and QE. His124 serves as a coordination point for Zn(2+). Substrate is bound by residues Arg152, Gln164, and Tyr231.

It belongs to the gamma-class carbonic anhydrase family. In terms of assembly, component of the mitochondrial oxidoreductase respiratory chain complex I; element of the extra matrix-exposed domain, which is attached to the membrane arm of this complex. Interacts with GAMMACA2.

It is found in the mitochondrion membrane. Functionally, involved in complex I assembly in mitochondria and respiration. The chain is Gamma carbonic anhydrase-like 2, mitochondrial (GAMMACAL2) from Arabidopsis thaliana (Mouse-ear cress).